Here is a 216-residue protein sequence, read N- to C-terminus: Adenylate kinase (216 aa).

Position 10 to 15 (10 to 15 (GAGKGT)) interacts with ATP. Residues 30-59 (STGDMFRAAMKAETEMGLQAKSFIDKGALV) are NMP. AMP contacts are provided by residues threonine 31, arginine 36, 57–59 (ALV), 85–88 (GFPR), and glutamine 92. An LID region spans residues 126 to 163 (GRRICKECGATYHLEFNPPAKADVCDKCGGELYQRSDD). An ATP-binding site is contributed by arginine 127. The Zn(2+) site is built by cysteine 130 and cysteine 133. 136 to 137 (TY) provides a ligand contact to ATP. Zn(2+) contacts are provided by cysteine 150 and cysteine 153. AMP is bound by residues arginine 160 and arginine 171. Glutamine 199 provides a ligand contact to ATP.

The protein belongs to the adenylate kinase family. As to quaternary structure, monomer.

It localises to the cytoplasm. The enzyme catalyses AMP + ATP = 2 ADP. It participates in purine metabolism; AMP biosynthesis via salvage pathway; AMP from ADP: step 1/1. In terms of biological role, catalyzes the reversible transfer of the terminal phosphate group between ATP and AMP. Plays an important role in cellular energy homeostasis and in adenine nucleotide metabolism. This chain is Adenylate kinase, found in Bacillus cereus (strain B4264).